The chain runs to 467 residues: Putative sulfoquinovose importer (467 aa).

Helical transmembrane passes span 17–37, 54–74, 88–108, 121–141, 160–180, 185–205, 238–258, 275–295, 303–323, 325–345, 379–399, and 414–434; these read IAYG…TLYL, IIFL…GFLL, PFIL…FIAT, ALFM…GAMI, GGAT…QSLF, VGYA…MMLC, LLVL…KLAI, WMGF…PLTV, VYLA…FWGS, SFTF…VNSL, ISAA…GYVP, and LIFI…GFFY.

The protein belongs to the sodium:galactoside symporter (TC 2.A.2) family.

It is found in the cell inner membrane. Its function is as follows. Could be involved in sulfoquinovose import. This Escherichia coli (strain K12) protein is Putative sulfoquinovose importer (yihO).